The following is a 100-amino-acid chain: Urease subunit gamma (100 aa).

Belongs to the urease gamma subunit family. In terms of assembly, heterotrimer of UreA (gamma), UreB (beta) and UreC (alpha) subunits. Three heterotrimers associate to form the active enzyme.

Its subcellular location is the cytoplasm. The enzyme catalyses urea + 2 H2O + H(+) = hydrogencarbonate + 2 NH4(+). The protein operates within nitrogen metabolism; urea degradation; CO(2) and NH(3) from urea (urease route): step 1/1. The chain is Urease subunit gamma from Burkholderia mallei (strain NCTC 10247).